The following is a 1237-amino-acid chain: Rho guanine nucleotide exchange factor 10-like protein (1237 aa).

2 disordered regions span residues 1–117 (MASS…SSRR) and 132–203 (YDDV…QPKM). The segment covering 25 to 45 (EAEDDPGEGFEFDDSDDDEDT) has biased composition (acidic residues). At serine 39 the chain carries Phosphoserine. Phosphotyrosine occurs at positions 132 and 153. Composition is skewed to basic and acidic residues over residues 146–163 (EAERNQPYEDARQDRAPQ) and 184–194 (EEAKPEAEPTK). Position 241 is a phosphoserine (serine 241). A DH domain is found at 276–463 (VRRHILGSIV…ETLAEKLNEQ (188 aa)). Disordered stretches follow at residues 1091 to 1118 (QEEAEGQQAEEDKPDGPAPEPAPVPASH) and 1142 to 1164 (PGPLLSVREPEPADGSALEHSEE).

Interacts with RHOA, RHOB and RHOC.

It is found in the cytoplasm. Its function is as follows. Acts as a guanine nucleotide exchange factor (GEF) for RHOA, RHOB and RHOC. The protein is Rho guanine nucleotide exchange factor 10-like protein (ARHGEF10L) of Bos taurus (Bovine).